A 481-amino-acid chain; its full sequence is Protein FIZZY-RELATED 3 (481 aa).

The segment at 100-165 (PAGGQGSASS…RKVPKTPHKV (66 aa)) is disordered. Positions 125–136 (SNSSPSSPFSPS) are enriched in low complexity. Residues 154–163 (PPRKVPKTPH) are compositionally biased toward basic residues. WD repeat units follow at residues 172–209 (QDDF…VTKL), 213–252 (GPND…RVRT), 255–292 (GHQT…DFVS), 296–335 (GHKS…PILK), 338–380 (EHTA…QLNS), 382–423 (DTGS…KVAT), and 426–465 (GHSM…KMQT).

The protein belongs to the WD repeat CDC20/Fizzy family. In terms of assembly, associates with the APC/C complex. Interacts with CDC20-1, CDC20-2, CYCA1-1, CYCA3-4, CYCB1-1 and CYCB1-2. Binds to GIG1 and PYM.

It participates in protein modification; protein ubiquitination. Its function is as follows. Activator protein that regulates the ubiquitin ligase activity and substrate specificity of the anaphase promoting complex/cyclosome (APC/C). In Arabidopsis thaliana (Mouse-ear cress), this protein is Protein FIZZY-RELATED 3 (FZR3).